The chain runs to 544 residues: Prolyl 4-hydroxylase subunit alpha-3 (544 aa).

The first 24 residues, 1–24, serve as a signal peptide directing secretion; the sequence is MGPGARLAALLVLLKLGVGDPAAA. One copy of the TPR repeat lies at 227 to 260; the sequence is EDALDYLAFACYQVGNVSCALSLSREFLVYSPDN. N-linked (GlcNAc...) asparagine glycosylation occurs at asparagine 242. The Fe2OG dioxygenase domain maps to 422–529; sequence YAEYLQVVNY…KWVANKWIHE (108 aa). 2 residues coordinate Fe cation: histidine 440 and aspartate 442. The N-linked (GlcNAc...) asparagine glycan is linked to asparagine 482. Histidine 510 lines the Fe cation pocket. Lysine 520 contacts 2-oxoglutarate.

The protein belongs to the P4HA family. As to quaternary structure, heterotetramer of two alpha-3 chains and two beta chains (the beta chain is the multi-functional PDI). Requires Fe(2+) as cofactor. L-ascorbate is required as a cofactor. In terms of processing, N-glycosylation plays no role in the catalytic activity.

It localises to the endoplasmic reticulum lumen. It catalyses the reaction L-prolyl-[collagen] + 2-oxoglutarate + O2 = trans-4-hydroxy-L-prolyl-[collagen] + succinate + CO2. Functionally, catalyzes the post-translational formation of 4-hydroxyproline in -Xaa-Pro-Gly- sequences in collagens and other proteins. This is Prolyl 4-hydroxylase subunit alpha-3 (P4ha3) from Rattus norvegicus (Rat).